A 127-amino-acid chain; its full sequence is Large ribosomal subunit protein bL12 (127 aa).

It belongs to the bacterial ribosomal protein bL12 family. As to quaternary structure, homodimer. Part of the ribosomal stalk of the 50S ribosomal subunit. Forms a multimeric L10(L12)X complex, where L10 forms an elongated spine to which 2 to 4 L12 dimers bind in a sequential fashion. Binds GTP-bound translation factors.

Forms part of the ribosomal stalk which helps the ribosome interact with GTP-bound translation factors. Is thus essential for accurate translation. This chain is Large ribosomal subunit protein bL12, found in Desulforapulum autotrophicum (strain ATCC 43914 / DSM 3382 / VKM B-1955 / HRM2) (Desulfobacterium autotrophicum).